Reading from the N-terminus, the 477-residue chain is ETS translocation variant 1 (477 aa).

Serine 94 bears the Phosphoserine mark. A disordered region spans residues 128 to 179; the sequence is PQVGMRPSNPPTPSSTPVSPLHHASPNSTHTPKPDRAFPAHLPPSQSIPDSS. A phosphoserine; by RPS6KA1 and RPS6KA5 mark is found at serine 191 and serine 216. Residue lysine 317 forms a Glycyl lysine isopeptide (Lys-Gly) (interchain with G-Cter in SUMO2) linkage. Positions 335 to 415 form a DNA-binding region, ETS; the sequence is LQLWQFLVAL…AGERYVYKFV (81 aa).

This sequence belongs to the ETS family. Sumoylated. Post-translationally, phosphorylated at Ser-191 and Ser-216 by RPS6KA1 and RPS6KA5; phosphorylation activates transcriptional activity. In terms of tissue distribution, very highly expressed in brain, highly expressed in testis, lung and heart, moderately in spleen, small intestine, pancreas and colon, weakly in liver, prostate and thymus, very weakly in skeletal muscle, kidney and ovary and not in placenta and peripheral blood leukocytes.

The protein localises to the nucleus. Its function is as follows. Transcriptional activator that binds to DNA sequences containing the consensus pentanucleotide 5'-CGGA[AT]-3'. Required for olfactory dopaminergic neuron differentiation; may directly activate expression of tyrosine hydroxylase (TH). This is ETS translocation variant 1 from Homo sapiens (Human).